The primary structure comprises 213 residues: Large ribosomal subunit protein uL3 (213 aa).

The segment at 131–168 (GPMSHGSKNHRLPGSTGAGTTPGRVYPGKRMAGRSGND) is disordered.

This sequence belongs to the universal ribosomal protein uL3 family. In terms of assembly, part of the 50S ribosomal subunit. Forms a cluster with proteins L14 and L19.

In terms of biological role, one of the primary rRNA binding proteins, it binds directly near the 3'-end of the 23S rRNA, where it nucleates assembly of the 50S subunit. The chain is Large ribosomal subunit protein uL3 from Synechococcus elongatus (strain ATCC 33912 / PCC 7942 / FACHB-805) (Anacystis nidulans R2).